A 570-amino-acid polypeptide reads, in one-letter code: Hydroxylamine reductase (570 aa).

Cys-5, Cys-8, Cys-17, and Cys-23 together coordinate [4Fe-4S] cluster. The hybrid [4Fe-2O-2S] cluster site is built by His-266, Glu-290, Cys-334, Cys-425, Cys-453, Cys-478, Glu-513, and Lys-515. Cys-425 is modified (cysteine persulfide).

The protein belongs to the HCP family. Requires [4Fe-4S] cluster as cofactor. It depends on hybrid [4Fe-2O-2S] cluster as a cofactor.

The protein resides in the cytoplasm. It carries out the reaction A + NH4(+) + H2O = hydroxylamine + AH2 + H(+). Functionally, catalyzes the reduction of hydroxylamine to form NH(3) and H(2)O. This Clostridium botulinum (strain Kyoto / Type A2) protein is Hydroxylamine reductase.